We begin with the raw amino-acid sequence, 302 residues long: Homoserine kinase (302 aa).

ATP is bound at residue 92–102; the sequence is PLARGLGSSAT.

Belongs to the GHMP kinase family. Homoserine kinase subfamily.

It localises to the cytoplasm. The catalysed reaction is L-homoserine + ATP = O-phospho-L-homoserine + ADP + H(+). Its pathway is amino-acid biosynthesis; L-threonine biosynthesis; L-threonine from L-aspartate: step 4/5. Functionally, catalyzes the ATP-dependent phosphorylation of L-homoserine to L-homoserine phosphate. In Trichormus variabilis (strain ATCC 29413 / PCC 7937) (Anabaena variabilis), this protein is Homoserine kinase.